The primary structure comprises 1007 residues: A disintegrin and metalloproteinase with thrombospondin motifs 1 (1007 aa).

Residues 1–20 form the signal peptide; that stretch reads MPCCLWAALSLLLAVVGAGA. Residues Asn-130 and Asn-228 are each glycosylated (N-linked (GlcNAc...) asparagine). One can recognise a Peptidase M12B domain in the interval 184 to 370; that stretch reads LWLELAIVAD…WSSCSKEQFH (187 aa). His-322 serves as a coordination point for Zn(2+). The Metal-binding motif lies at 322 to 333; sequence HELAHLLGLTHD. Glu-323 is an active-site residue. His-326 and His-332 together coordinate Zn(2+). Cystine bridges form between Cys-338/Cys-364, Cys-494/Cys-530, Cys-498/Cys-536, and Cys-509/Cys-520. The TSP type-1 1 domain occupies 482-537; sequence TPEWGDWEEWSACNADCGYGLRTRTRKCKYRGFVSESACEGAGSQVATCWAGSSCA. N-linked (GlcNAc...) asparagine glycosylation is found at Asn-561, Asn-610, Asn-626, Asn-737, Asn-777, and Asn-865. TSP type-1 domains are found at residues 833–899 and 900–952; these read CEFV…NRIP and CPVY…RRCP. Intrachain disulfides connect Cys-912/Cys-946, Cys-916/Cys-951, and Cys-927/Cys-935.

Requires Zn(2+) as cofactor.

It is found in the secreted. The protein resides in the extracellular space. It localises to the extracellular matrix. Its function is as follows. Involved in larval molting and metamorphosis. May degrade extracellular matrix (ECM) and basement membrane (BM) during the development of organs to allow degeneration and remodeling of tissues. This is A disintegrin and metalloproteinase with thrombospondin motifs 1 from Bombyx mori (Silk moth).